The following is a 320-amino-acid chain: Pyrroline-5-carboxylate reductase 2 (320 aa).

Position 2 is an N-acetylserine (serine 2). NADP(+) is bound by residues 6–11 (IGAGQL) and serine 34. Residues alanine 8, glutamine 10, leucine 11, serine 34, glutamate 36, asparagine 56, valine 70, lysine 71, and alanine 97 each contribute to the NADPH site. NADP(+) contacts are provided by residues asparagine 56, 69 to 72 (AVKP), and 95 to 97 (CAA). Glutamate 164 is an L-proline binding site. Residue asparagine 230 coordinates NADPH. L-proline is bound by residues alanine 237 and threonine 238. Low complexity predominate over residues 296 to 305 (TVSTLTPSSP). A disordered region spans residues 296–320 (TVSTLTPSSPGKLLTRSLALGGKKD). Serine 304 carries the phosphoserine modification.

It belongs to the pyrroline-5-carboxylate reductase family. As to quaternary structure, homodecamer; composed of 5 homodimers. Interacts with LTO1.

The protein localises to the cytoplasm. It is found in the mitochondrion. It catalyses the reaction L-proline + NADP(+) = (S)-1-pyrroline-5-carboxylate + NADPH + 2 H(+). The enzyme catalyses L-proline + NAD(+) = (S)-1-pyrroline-5-carboxylate + NADH + 2 H(+). It participates in amino-acid biosynthesis; L-proline biosynthesis; L-proline from L-glutamate 5-semialdehyde: step 1/1. Oxidoreductase that catalyzes the last step in proline biosynthesis, which corresponds to the reduction of pyrroline-5-carboxylate to L-proline using NAD(P)H. At physiologic concentrations, has higher specific activity in the presence of NADH. Involved in cellular response to oxidative stress. In some cell types, such as erythrocytes, its primary function may be the generation of NADP(+). The polypeptide is Pyrroline-5-carboxylate reductase 2 (PYCR2) (Pongo abelii (Sumatran orangutan)).